Here is a 144-residue protein sequence, read N- to C-terminus: Maximins 2/H8 type 2 (144 aa).

The N-terminal stretch at 1–18 is a signal peptide; the sequence is MNFKYIVAVSFLIASAYA. The propeptide occupies 19–43; the sequence is RSEENEIQSLSQRDVLEEESLREIR. At N70 the chain carries Asparagine amide. Positions 74 to 123 are excised as a propeptide; the sequence is TAEEHEVMKRLETVMRDLDSLDYPEEASERETRGFNQEEIANLFTKKEKR. Residue I143 is modified to Isoleucine amide.

It belongs to the bombinin family. Expressed by the skin glands.

It is found in the secreted. Its function is as follows. Maximin-2 shows antibacterial activity against both Gram-positive and Gram-negative bacteria. It also shows antimicrobial activity against the fungus C.albicans, but not against A.flavus nor P.uticale. It has little hemolytic activity. Functionally, maximin-H8 shows antimicrobial activity against bacteria and against the fungus C.albicans. Shows strong hemolytic activity. The protein is Maximins 2/H8 type 2 of Bombina maxima (Giant fire-bellied toad).